The following is a 137-amino-acid chain: Protein Turandot X (137 aa).

Positions 1–24 (MKVPVFQLSCLLCLIVCLLCSVKA) are cleaved as a signal peptide.

Belongs to the Turandot family.

Its subcellular location is the secreted. Its function is as follows. A humoral factor that may play a role in stress tolerance. In Drosophila persimilis (Fruit fly), this protein is Protein Turandot X.